The following is a 304-amino-acid chain: Acetaldehyde dehydrogenase 1 (304 aa).

11–14 serves as a coordination point for NAD(+); it reads SGNI. The Acyl-thioester intermediate role is filled by C130. Residues 161–169 and N272 contribute to the NAD(+) site; that span reads SVGPGTRAN.

Belongs to the acetaldehyde dehydrogenase family.

The catalysed reaction is acetaldehyde + NAD(+) + CoA = acetyl-CoA + NADH + H(+). This Azoarcus sp. (strain BH72) protein is Acetaldehyde dehydrogenase 1 (lapF).